A 288-amino-acid chain; its full sequence is tRNA pseudouridine synthase A (288 aa).

Catalysis depends on Asp59, which acts as the Nucleophile. Residue Tyr134 participates in substrate binding.

This sequence belongs to the tRNA pseudouridine synthase TruA family. Homodimer.

It carries out the reaction uridine(38/39/40) in tRNA = pseudouridine(38/39/40) in tRNA. In terms of biological role, formation of pseudouridine at positions 38, 39 and 40 in the anticodon stem and loop of transfer RNAs. The sequence is that of tRNA pseudouridine synthase A from Leifsonia xyli subsp. xyli (strain CTCB07).